The chain runs to 482 residues: UDP-N-acetylmuramate--L-alanine ligase (482 aa).

115–121 (GTHGKTT) contacts ATP.

Belongs to the MurCDEF family.

Its subcellular location is the cytoplasm. It carries out the reaction UDP-N-acetyl-alpha-D-muramate + L-alanine + ATP = UDP-N-acetyl-alpha-D-muramoyl-L-alanine + ADP + phosphate + H(+). Its pathway is cell wall biogenesis; peptidoglycan biosynthesis. Cell wall formation. This chain is UDP-N-acetylmuramate--L-alanine ligase, found in Rhodospirillum centenum (strain ATCC 51521 / SW).